Consider the following 345-residue polypeptide: Dihydroorotate dehydrogenase (quinone) (345 aa).

FMN contacts are provided by residues 65-69 and Thr-89; that span reads AGLDK. Lys-69 is a substrate binding site. 114 to 118 provides a ligand contact to substrate; sequence NRMGF. Residues Asn-142 and Asn-175 each coordinate FMN. Asn-175 provides a ligand contact to substrate. The Nucleophile role is filled by Ser-178. Asn-180 contributes to the substrate binding site. 2 residues coordinate FMN: Lys-220 and Thr-248. A substrate-binding site is contributed by 249 to 250; the sequence is NT. Residues Gly-271, Gly-300, and 321–322 contribute to the FMN site; that span reads YT.

This sequence belongs to the dihydroorotate dehydrogenase family. Type 2 subfamily. In terms of assembly, monomer. It depends on FMN as a cofactor.

The protein resides in the cell membrane. It catalyses the reaction (S)-dihydroorotate + a quinone = orotate + a quinol. It participates in pyrimidine metabolism; UMP biosynthesis via de novo pathway; orotate from (S)-dihydroorotate (quinone route): step 1/1. Its function is as follows. Catalyzes the conversion of dihydroorotate to orotate with quinone as electron acceptor. In Burkholderia lata (strain ATCC 17760 / DSM 23089 / LMG 22485 / NCIMB 9086 / R18194 / 383), this protein is Dihydroorotate dehydrogenase (quinone).